A 1172-amino-acid chain; its full sequence is Serine/threonine-protein kinase Nek10 (1172 aa).

The ARM repeat unit spans residues 209–251; sequence GAHKTLVNLLGARDTNVLLGSLLALASLAESQECREKISELNI. Residues 481–514 adopt a coiled-coil conformation; that stretch reads YEELVSKLNLLVEDELKQIAENIESINQNKAPLK. One can recognise a Protein kinase domain in the interval 519–712; the sequence is YAILDHLGSG…SEPYGEKADV (194 aa). ATP-binding positions include 525-533 and Lys548; that span reads LGSGAFGCV. Catalysis depends on Asp655, which acts as the Proton acceptor. 2 disordered regions span residues 855-875 and 898-954; these read SELS…YGKD and TYSE…GSRP. The span at 919-945 shows a compositional bias: polar residues; the sequence is PLKESTFNILKRSFSASGGERQSQTRD.

It belongs to the protein kinase superfamily. NEK Ser/Thr protein kinase family. NIMA subfamily. Interacts with RAF1 and MAP2K1; the interaction is direct with RAF1 and required for ERK1/2-signaling pathway activation in response to UV irradiation. Mg(2+) serves as cofactor. Expressed in the lung.

It catalyses the reaction L-seryl-[protein] + ATP = O-phospho-L-seryl-[protein] + ADP + H(+). The catalysed reaction is L-threonyl-[protein] + ATP = O-phospho-L-threonyl-[protein] + ADP + H(+). Plays a role in the cellular response to UV irradiation. Mediates G2/M cell cycle arrest, MEK autoactivation and ERK1/2-signaling pathway activation in response to UV irradiation. In ciliated cells of airways, it is involved in the regulation of mucociliary transport. This Homo sapiens (Human) protein is Serine/threonine-protein kinase Nek10.